Reading from the N-terminus, the 85-residue chain is Probable [Fe-S]-dependent transcriptional repressor (85 aa).

Iron-sulfur cluster contacts are provided by C56, C61, C64, and C71.

The protein belongs to the FeoC family.

Its function is as follows. May function as a transcriptional regulator that controls feoABC expression. This is Probable [Fe-S]-dependent transcriptional repressor from Yersinia pseudotuberculosis serotype O:1b (strain IP 31758).